We begin with the raw amino-acid sequence, 329 residues long: Porphobilinogen deaminase (329 aa).

An S-(dipyrrolylmethanemethyl)cysteine modification is found at cysteine 250.

Belongs to the HMBS family. In terms of assembly, monomer. Dipyrromethane serves as cofactor.

The enzyme catalyses 4 porphobilinogen + H2O = hydroxymethylbilane + 4 NH4(+). It functions in the pathway porphyrin-containing compound metabolism; protoporphyrin-IX biosynthesis; coproporphyrinogen-III from 5-aminolevulinate: step 2/4. Functionally, tetrapolymerization of the monopyrrole PBG into the hydroxymethylbilane pre-uroporphyrinogen in several discrete steps. This Burkholderia pseudomallei (strain 668) protein is Porphobilinogen deaminase.